We begin with the raw amino-acid sequence, 156 residues long: Arginine repressor (156 aa).

It belongs to the ArgR family.

It is found in the cytoplasm. Its pathway is amino-acid biosynthesis; L-arginine biosynthesis [regulation]. Functionally, regulates arginine biosynthesis genes. This Shewanella woodyi (strain ATCC 51908 / MS32) protein is Arginine repressor.